Reading from the N-terminus, the 215-residue chain is Venom allergen 5.02 (215 aa).

The N-terminal stretch at 1-10 is a signal peptide; the sequence is PIINLSFGEA. 4 cysteine pairs are disulfide-bonded: C14–C26, C18–C111, C36–C104, and C181–C198. The 146-residue stretch at 55–200 folds into the SCP domain; the sequence is VNRHNQFRQK…WHTHYLVCNY (146 aa).

It belongs to the CRISP family. Venom allergen 5-like subfamily. As to expression, expressed by the venom gland.

It is found in the secreted. This is Venom allergen 5.02 from Dolichovespula maculata (Bald-faced hornet).